The primary structure comprises 298 residues: Probable endonuclease 4 (298 aa).

The Zn(2+) site is built by H69, H111, E146, D180, H183, H215, D228, H230, and E260.

It belongs to the AP endonuclease 2 family. It depends on Zn(2+) as a cofactor.

It carries out the reaction Endonucleolytic cleavage to 5'-phosphooligonucleotide end-products.. Its function is as follows. Endonuclease IV plays a role in DNA repair. It cleaves phosphodiester bonds at apurinic or apyrimidinic (AP) sites, generating a 3'-hydroxyl group and a 5'-terminal sugar phosphate. The protein is Probable endonuclease 4 of Bacillus cytotoxicus (strain DSM 22905 / CIP 110041 / 391-98 / NVH 391-98).